The sequence spans 1197 residues: SRC kinase signaling inhibitor 1 (1197 aa).

Residues 19–45 (AEGRARSPREEVGPRDPGGRGEPDPER) are compositionally biased toward basic and acidic residues. The disordered stretch occupies residues 19–80 (AEGRARSPRE…GGSGGRRFSN (62 aa)). A phosphoserine mark is found at serine 47 and serine 52. Positions 65–75 (LGGGGSGGSGG) are enriched in gly residues. Position 79 is a phosphoserine (serine 79). Threonine 86 is subject to Phosphothreonine. Serine 87, serine 98, serine 178, serine 200, serine 204, serine 214, and serine 260 each carry phosphoserine. Phosphotyrosine is present on tyrosine 276. The interval 319–415 (ASRESSPTRR…RRDVKPDEDL (97 aa)) is disordered. The segment covering 321–331 (RESSPTRRLNN) has biased composition (polar residues). Over residues 332 to 341 (LSPASHLASS) the composition is skewed to low complexity. Phosphoserine occurs at positions 333, 342, and 359. A compositionally biased stretch (low complexity) spans 348–366 (PSGLPSGLPSGSPSRSRLS). An omega-N-methylarginine mark is found at arginine 364 and arginine 371. Phosphoserine is present on residues serine 378, serine 397, and serine 399. Polar residues predominate over residues 391–400 (PTSQGVSPSP). Basic and acidic residues predominate over residues 404–415 (LERRDVKPDEDL). The residue at position 431 (tyrosine 431) is a Phosphotyrosine. The segment at 501-676 (GFRLPPSSPQ…AVSSTPAGQP (176 aa)) is disordered. Residues 520–531 (GGPPPPHSPYSG) show a composition bias toward pro residues. Phosphoserine occurs at positions 527, 530, and 534. An Omega-N-methylarginine modification is found at arginine 535. Phosphoserine occurs at positions 537, 547, 549, 551, and 556. The segment covering 595-607 (KDTETRERMEAME) has biased composition (basic and acidic residues). Phosphoserine occurs at positions 631 and 655. A phosphothreonine mark is found at threonine 658 and threonine 671. The interaction with SNAP25 stretch occupies residues 681–731 (RLQMQMHLRGLQNSASDLRGQLQQLRKLQLQNQESVRALLKRTEAELSMRV). 2 coiled-coil regions span residues 688 to 708 (LRGL…LRKL) and 760 to 780 (EELI…IQRD). Phosphoserine is present on residues serine 878 and serine 900. Disordered stretches follow at residues 891–949 (GLDF…ERDW) and 983–1065 (DCAS…VVTS). Threonine 918 bears the Phosphothreonine mark. Serine 1021 is subject to Phosphoserine. Positions 1036 to 1045 (KSPPPPPPRR) are enriched in pro residues. Residues serine 1077 and serine 1094 each carry the phosphoserine modification. The segment at 1141 to 1163 (SRLKAAQGPAGSPDKGKHGKQRT) is disordered.

The protein belongs to the SRCIN1 family. Interacts with BCAR1/p130Cas through its C-terminal domain and with CSK, CTTN and SRC. Also interacts with MAPRE3/EB3, SORBS3/vinexin and the N-terminal coiled-coil region of SNAP25. Tyrosine-phosphorylated in response to EGF and to cell adhesion to integrin ligands. As to expression, expressed exclusively in brain. Abundant in telencephalon and expressed moderately in cerebellum, hypothalamus, thalamus, superior and inferior colliculi, and olfactory bulb. No expression detected in medulla oblongata, spinal cord or pituitary gland. Enriched in the neuropil rather than soma in the thalamus, corpus striatum and cerebral cortex. Detected in astrocytes.

It localises to the cytoplasm. Its subcellular location is the cytoskeleton. The protein localises to the cell projection. It is found in the axon. The protein resides in the dendrite. It localises to the presynapse. Its subcellular location is the postsynapse. The protein localises to the postsynaptic density. Acts as a negative regulator of SRC by activating CSK which inhibits SRC activity and downstream signaling, leading to impaired cell spreading and migration. Regulates dendritic spine morphology. Involved in calcium-dependent exocytosis. May play a role in neurotransmitter release or synapse maintenance. The protein is SRC kinase signaling inhibitor 1 of Rattus norvegicus (Rat).